The primary structure comprises 343 residues: Diterpene cyclase DtcycB (343 aa).

Residues Asn-219, Ser-223, and Glu-227 each contribute to the Mg(2+) site.

Belongs to the terpene synthase family. In terms of assembly, homodimer. Mg(2+) serves as cofactor.

The catalysed reaction is (2E,6E,10E)-geranylgeranyl diphosphate + H2O = (R)-nephthenol + diphosphate. It catalyses the reaction (2E,6E,10E)-geranylgeranyl diphosphate = (R)-cembrene A + diphosphate. The enzyme catalyses (2E,6E,10E)-geranylgeranyl diphosphate + H2O = (1S,4E,8E,12E)-2,2,5,9,13-pentamethylcyclopentadeca-4,8,12-trien-1-ol + diphosphate. Its function is as follows. Diterpene cyclases that can form multiple diterpene products. The protein is Diterpene cyclase DtcycB of Streptomyces sp.